A 319-amino-acid chain; its full sequence is Lipoyl synthase (319 aa).

A disordered region spans residues Asp-6 to Pro-29. Positions Arg-16 to Pro-29 are enriched in basic and acidic residues. Cys-61, Cys-66, Cys-72, Cys-87, Cys-91, Cys-94, and Ser-300 together coordinate [4Fe-4S] cluster. In terms of domain architecture, Radical SAM core spans Trp-73–Leu-289.

This sequence belongs to the radical SAM superfamily. Lipoyl synthase family. Requires [4Fe-4S] cluster as cofactor.

Its subcellular location is the cytoplasm. It catalyses the reaction [[Fe-S] cluster scaffold protein carrying a second [4Fe-4S](2+) cluster] + N(6)-octanoyl-L-lysyl-[protein] + 2 oxidized [2Fe-2S]-[ferredoxin] + 2 S-adenosyl-L-methionine + 4 H(+) = [[Fe-S] cluster scaffold protein] + N(6)-[(R)-dihydrolipoyl]-L-lysyl-[protein] + 4 Fe(3+) + 2 hydrogen sulfide + 2 5'-deoxyadenosine + 2 L-methionine + 2 reduced [2Fe-2S]-[ferredoxin]. It functions in the pathway protein modification; protein lipoylation via endogenous pathway; protein N(6)-(lipoyl)lysine from octanoyl-[acyl-carrier-protein]: step 2/2. In terms of biological role, catalyzes the radical-mediated insertion of two sulfur atoms into the C-6 and C-8 positions of the octanoyl moiety bound to the lipoyl domains of lipoate-dependent enzymes, thereby converting the octanoylated domains into lipoylated derivatives. In Rhodopseudomonas palustris (strain ATCC BAA-98 / CGA009), this protein is Lipoyl synthase.